Here is a 932-residue protein sequence, read N- to C-terminus: uncharacterized protein (932 aa).

5 disordered regions span residues 26–120, 158–289, 304–617, 635–720, and 802–863; these read NINN…NMLT, MGIG…EEKK, NNNN…INHD, QQSQ…PPLV, and SVSS…FPLE. Composition is skewed to low complexity over residues 41–105 and 163–241; these read NNNI…IISS and NNNN…YGNN. Positions 242–253 are enriched in polar residues; that stretch reads TPVNYIHNNSTP. Residues 265–285 show a composition bias toward acidic residues; it reads SDEEDSVLYSSDDSEESDYEE. The segment covering 304–475 has biased composition (low complexity); it reads NNNNINNNNM…NNNNNNNNNN (172 aa). Composition is skewed to polar residues over residues 476-492 and 527-540; these read ENYV…NTES and DIPN…TKQQ. Positions 548 to 590 are enriched in low complexity; it reads SPVYSPPNNLSPLSSPYLHHNSNNNSNNGGGNSNNNNTNFNYG. Positions 606-617 are enriched in basic and acidic residues; it reads GERDPPHVINHD. Composition is skewed to low complexity over residues 635–666, 696–707, and 813–853; these read QQSQ…PSSS, SPPNTSISSLSS, and NSSN…NNNS. Residues 854–863 are compositionally biased toward basic and acidic residues; sequence EPKKPKFPLE.

This is an uncharacterized protein from Dictyostelium discoideum (Social amoeba).